The primary structure comprises 616 residues: Chaperone protein DnaK (616 aa).

Thr-175 is subject to Phosphothreonine; by autocatalysis. Residues 579-605 form a disordered region; the sequence is GGDPSQAGGFDPNAAGGAQQAPHDDNV.

Belongs to the heat shock protein 70 family.

Its function is as follows. Acts as a chaperone. The polypeptide is Chaperone protein DnaK (Clostridium botulinum (strain Alaska E43 / Type E3)).